The sequence spans 333 residues: Autoinducer 2 import system permease protein LsrC (333 aa).

9 helical membrane-spanning segments follow: residues 14–34 (LIAI…YFSL), 39–59 (LVFS…LVML), 70–90 (IAGL…SLSV), 93–113 (LLTL…VTWL), 115–135 (IPAI…MLLL), 157–177 (LNIS…AWIL), 206–226 (IQII…IVFA), 252–272 (GISL…AFFL), and 284–304 (LPAW…LIFD).

It belongs to the binding-protein-dependent transport system permease family. AraH/RbsC subfamily. As to quaternary structure, the complex is composed of two ATP-binding proteins (LsrA), two transmembrane proteins (LsrC and LsrD) and a solute-binding protein (LsrB).

It localises to the cell inner membrane. Functionally, part of the ABC transporter complex LsrABCD involved in autoinducer 2 (AI-2) import. Probably responsible for the translocation of the substrate across the membrane. This is Autoinducer 2 import system permease protein LsrC (lsrC) from Photorhabdus laumondii subsp. laumondii (strain DSM 15139 / CIP 105565 / TT01) (Photorhabdus luminescens subsp. laumondii).